Reading from the N-terminus, the 583-residue chain is ATP-dependent lipid A-core flippase (583 aa).

The next 5 helical transmembrane spans lie at 27 to 47 (LAVAVVALIINAVSDTYMVSL), 69 to 89 (LLVFGLMFIRGISSFVSTYCL), 142 to 162 (ALVSIVREGTSIIGLLVLMFY), 165 to 185 (WQLSLVLILVAPVVAWAIGFV), and 249 to 269 (AAANPIIQMIASIAIVVVLYL). One can recognise an ABC transmembrane type-1 domain in the interval 28–310 (AVAVVALIIN…LTNVTSQFQR (283 aa)). The ABC transporter domain maps to 342–578 (VNVKDISFTY…DGAYAQLHRI (237 aa)). 376-383 (GRSGSGKS) provides a ligand contact to ATP.

The protein belongs to the ABC transporter superfamily. Lipid exporter (TC 3.A.1.106) family. Homodimer.

Its subcellular location is the cell inner membrane. The enzyme catalyses ATP + H2O + lipid A-core oligosaccharideSide 1 = ADP + phosphate + lipid A-core oligosaccharideSide 2.. Involved in lipopolysaccharide (LPS) biosynthesis. Translocates lipid A-core from the inner to the outer leaflet of the inner membrane. Transmembrane domains (TMD) form a pore in the inner membrane and the ATP-binding domain (NBD) is responsible for energy generation. The polypeptide is ATP-dependent lipid A-core flippase (Vibrio vulnificus (strain YJ016)).